The primary structure comprises 364 residues: Probable endopolygalacturonase B (364 aa).

The first 20 residues, 1-20 (MHFFQSSLVAATMGAALVAA), serve as a signal peptide directing secretion. Residues 21-29 (APAADLETR) constitute a propeptide that is removed on maturation. C32 and C47 form a disulfide bridge. N-linked (GlcNAc...) asparagine glycosylation is found at N138 and N141. PbH1 repeat units lie at residues 159–188 (SDHLTIKDVLLDNSAGTKLGHNTDAFDVGS), 189–210 (STYITIDGATVYNQDDCLAVNS), 211–231 (GEHITFTNGYCNGGHGLSIGS), 240–261 (VNDVTISNSQVINSQNGARIKT), 269–291 (VTGVKFQDISLKGITKYGIVVQQ), and 303–324 (TNGVKVSDITFEKVTGTVTSSA). D203 serves as the catalytic Proton donor. A disulfide bridge connects residues C205 and C221. H225 is an active-site residue. The cysteines at positions 331 and 336 are disulfide-linked. N-linked (GlcNAc...) asparagine glycosylation is present at N338. A disulfide bridge connects residues C355 and C364.

It belongs to the glycosyl hydrolase 28 family.

It is found in the secreted. The enzyme catalyses (1,4-alpha-D-galacturonosyl)n+m + H2O = (1,4-alpha-D-galacturonosyl)n + (1,4-alpha-D-galacturonosyl)m.. Its function is as follows. Involved in maceration and soft-rotting of plant tissue. Hydrolyzes the 1,4-alpha glycosidic bonds of de-esterified pectate in the smooth region of the plant cell wall. This is Probable endopolygalacturonase B (pgaB) from Aspergillus fumigatus (strain ATCC MYA-4609 / CBS 101355 / FGSC A1100 / Af293) (Neosartorya fumigata).